The following is a 355-amino-acid chain: tRNA N6-adenosine threonylcarbamoyltransferase (355 aa).

His113 and His117 together coordinate Fe cation. Substrate-binding positions include 135–139 (LASGG), Asp168, Gly181, and Asn279. Position 307 (Asp307) interacts with Fe cation.

This sequence belongs to the KAE1 / TsaD family. Requires Fe(2+) as cofactor.

The protein resides in the cytoplasm. It carries out the reaction L-threonylcarbamoyladenylate + adenosine(37) in tRNA = N(6)-L-threonylcarbamoyladenosine(37) in tRNA + AMP + H(+). Its function is as follows. Required for the formation of a threonylcarbamoyl group on adenosine at position 37 (t(6)A37) in tRNAs that read codons beginning with adenine. Is involved in the transfer of the threonylcarbamoyl moiety of threonylcarbamoyl-AMP (TC-AMP) to the N6 group of A37, together with TsaE and TsaB. TsaD likely plays a direct catalytic role in this reaction. This is tRNA N6-adenosine threonylcarbamoyltransferase from Bradyrhizobium sp. (strain BTAi1 / ATCC BAA-1182).